Consider the following 150-residue polypeptide: Natriuretic peptides A (150 aa).

The first 24 residues, 1–24 (MSSFTITVSFLLVLVFQFPGQTRA), serve as a signal peptide directing secretion. 2 consecutive propeptides follow at residues 25–122 (NPVY…AAPR) and 92–102 (DGGALGRGPWD). Residues 77 to 100 (LEVPPWTGEVNPAQRDGGALGRGP) are disordered. Ser-128 carries the post-translational modification Phosphoserine. The cysteines at positions 129 and 145 are disulfide-linked.

This sequence belongs to the natriuretic peptide family. As to quaternary structure, homodimer; disulfide-linked antiparallel dimer. Post-translationally, the precursor molecule is proteolytically cleaved by CORIN at Arg-122 to produce the atrial natriuretic peptide. Undergoes further proteolytic cleavage by unknown proteases to give rise to long-acting natriuretic peptide, vessel dilator and kaliuretic peptide. Additional processing gives rise to the auriculin and atriopeptin peptides. In the kidneys, alternative processing by an unknown protease results in the peptide urodilatin. In terms of processing, cleavage by MME initiates degradation of the factor and thereby regulates its activity. Degradation by IDE results in reduced activation of NPR1 (in vitro). During IDE degradation, the resulting products can temporarily stimulate NPR2 to produce cGMP, before the fragments are completely degraded and inactivated by IDE (in vitro). Degraded by IDE. Post-translationally, phosphorylation on Ser-128 decreases vasorelaxant activity. Brain (at protein level).

The protein localises to the secreted. The protein resides in the perikaryon. Its subcellular location is the cell projection. Hormone that plays a key role in mediating cardio-renal homeostasis, and is involved in vascular remodeling and regulating energy metabolism. Acts by specifically binding and stimulating NPR1 to produce cGMP, which in turn activates effector proteins, such as PRKG1, that drive various biological responses. Regulates vasodilation, natriuresis, diuresis and aldosterone synthesis and is therefore essential for regulating blood pressure, controlling the extracellular fluid volume and maintaining the fluid-electrolyte balance. Also involved in inhibiting cardiac remodeling and cardiac hypertrophy by inducing cardiomyocyte apoptosis and attenuating the growth of cardiomyocytes and fibroblasts. Plays a role in female pregnancy by promoting trophoblast invasion and spiral artery remodeling in uterus, and thus prevents pregnancy-induced hypertension. In adipose tissue, acts in various cGMP- and PKG-dependent pathways to regulate lipid metabolism and energy homeostasis. This includes up-regulating lipid metabolism and mitochondrial oxygen utilization by activating the AMP-activated protein kinase (AMPK), and increasing energy expenditure by acting via MAPK11 to promote the UCP1-dependent thermogenesis of brown adipose tissue. Binds the clearance receptor NPR3 which removes the hormone from circulation. Functionally, may have a role in cardio-renal homeostasis through regulation of natriuresis, diuresis, vasodilation, and inhibiting aldosterone synthesis. In vitro, promotes the production of cGMP and induces vasodilation. May promote natriuresis, at least in part, by enhancing prostaglandin E2 synthesis resulting in the inhibition of renal Na+-K+-ATPase. However reports on the involvement of this peptide in mammal blood volume and blood pressure homeostasis are conflicting; according to a report, in vivo it is not sufficient to activate cGMP and does not inhibit collecting duct transport nor effect diuresis and natriuresis. Appears to bind to specific receptors that are distinct from the receptors bound by atrial natriuretic peptide and vessel dilator. Possibly enhances protein excretion in urine by decreasing proximal tubular protein reabsorption. Its function is as follows. May have a role in cardio-renal homeostasis through regulation of natriuresis, diuresis, and vasodilation. In vitro, promotes the production of cGMP and induces vasodilation. May promote natriuresis, at least in part, by enhancing prostaglandin E2 synthesis resulting in the inhibition of renal Na+-K+-ATPase. However reports on the involvement of this peptide in mammal blood volume and blood pressure homeostasis are conflicting; according to a report it is not sufficient to activate cGMP and does not inhibit collecting duct transport nor effect diuresis and natriuresis. Appears to bind to specific receptors that are distinct from the receptors bound by the atrial natriuretic and long-acting natriuretic peptides. Possibly functions in protein excretion in urine by maintaining the integrity of the proximal tubules and enhancing protein excretion by decreasing proximal tubular protein reabsorption. In terms of biological role, may have a role in cardio-renal homeostasis through regulation of diuresis and inhibiting aldosterone synthesis. In vitro, promotes the production of cGMP and induces vasodilation. May promote natriuresis, at least in part, by enhancing prostaglandin E2 synthesis resulting in the inhibition of renal Na+-K+-ATPase. May have a role in potassium excretion but not sodium excretion (natriuresis). Possibly enhances protein excretion in urine by decreasing proximal tubular protein reabsorption. Hormone produced in the kidneys that appears to be important for maintaining cardio-renal homeostasis. Mediates vasodilation, natriuresis and diuresis primarily in the renal system, in order to maintain the extracellular fluid volume and control the fluid-electrolyte balance. Specifically binds and stimulates cGMP production by renal transmembrane receptors, likely NPR1. Urodilatin not ANP, may be the natriuretic peptide responsible for the regulation of sodium and water homeostasis in the kidney. Functionally, may have a role in cardio-renal homeostasis through regulation of natriuresis and vasodilation. In vivo promotes natriuresis and in vitro, vasodilates renal artery strips. Its function is as follows. May have a role in cardio-renal homeostasis through regulation of regulation of natriuresis and vasodilation. In vivo promotes natriuresis. In vitro, vasodilates intestinal smooth muscle but not smooth muscle strips. In terms of biological role, may have a role in cardio-renal homeostasis through regulation of natriuresis and vasodilation. In vivo promotes natriuresis. In vitro, selectively vasodilates intestinal and vascular smooth muscle strips. May have a role in cardio-renal homeostasis through regulation of natriuresis and vasodilation. In vivo promotes natriuresis. In vitro, selectively vasodilates intestinal smooth muscle but not vascular smooth muscle strips. The sequence is that of Natriuretic peptides A (NPPA) from Sus scrofa (Pig).